The primary structure comprises 217 residues: Uracil-DNA glycosylase (217 aa).

The Proton acceptor role is filled by Asp62.

This sequence belongs to the uracil-DNA glycosylase (UDG) superfamily. UNG family.

The protein resides in the cytoplasm. It catalyses the reaction Hydrolyzes single-stranded DNA or mismatched double-stranded DNA and polynucleotides, releasing free uracil.. Excises uracil residues from the DNA which can arise as a result of misincorporation of dUMP residues by DNA polymerase or due to deamination of cytosine. The polypeptide is Uracil-DNA glycosylase (Streptococcus pyogenes serotype M4 (strain MGAS10750)).